The chain runs to 129 residues: MIRNVKKQRPVNLDLQTIRFPITAIASILHRVSGVITFIAVGILLWLLGTSLSSPEGFQQAADIMDGFIVKFIMWGILTALAYHVIVGIRHMLMDFGYLEETFEAGQRSAKISFVITVVLSLLAGVLVW.

The Cytoplasmic portion of the chain corresponds to 1-26 (MIRNVKKQRPVNLDLQTIRFPITAIA). Residues 27 to 52 (SILHRVSGVITFIAVGILLWLLGTSL) traverse the membrane as a helical segment. Over 53–68 (SSPEGFQQAADIMDGF) the chain is Periplasmic. Residues 69-89 (IVKFIMWGILTALAYHVIVGI) form a helical membrane-spanning segment. Position 84 (H84) interacts with heme. The Cytoplasmic segment spans residues 90–108 (RHMLMDFGYLEETFEAGQR). Residues 109–129 (SAKISFVITVVLSLLAGVLVW) form a helical membrane-spanning segment.

This sequence belongs to the cytochrome b560 family. Part of an enzyme complex containing four subunits: a flavoprotein, an iron-sulfur protein, plus two membrane-anchoring proteins, SdhC and SdhD. The complex can form homotrimers. The cofactor is heme.

The protein localises to the cell inner membrane. The protein operates within carbohydrate metabolism; tricarboxylic acid cycle. Membrane-anchoring subunit of succinate dehydrogenase (SDH). The polypeptide is Succinate dehydrogenase cytochrome b556 subunit (sdhC) (Salmonella typhi).